The following is a 655-amino-acid chain: Methyl-accepting chemotaxis protein McpC (655 aa).

Residues 1 to 8 are Cytoplasmic-facing; that stretch reads MFKKLHMK. Residues 9–29 traverse the membrane as a helical segment; that stretch reads IAVFVSIMLIITVVLLMLSSY. At 30-276 the chain is on the extracellular side; it reads LTLKPMITED…LMWISDKMNR (247 aa). The Cache domain occupies 148–225; the sequence is WTEPYKDVVT…SNQGKNISKD (78 aa). Residues 277–297 form a helical membrane-spanning segment; it reads ANLWISLIALIITIILSYFLA. The HAMP domain maps to 298-350; that stretch reads KTITGPIQQLIVKTKAVSAGDLTVRAESKSKDEVGILTRDFNLMVENMKEMVE. Topologically, residues 298–655 are cytoplasmic; it reads KTITGPIQQL…LMNTIAKFTL (358 aa). The Methyl-accepting transducer domain occupies 369-619; it reads VAAETNETSG…ESAAAAEEVN (251 aa).

This sequence belongs to the methyl-accepting chemotaxis (MCP) protein family. Interacts with FloT. Post-translationally, some glutamine residues are deamidated to glutamate by CheD and subsequently methylated.

It is found in the cell membrane. The protein resides in the membrane raft. Functionally, chemotactic-signal transducers respond to changes in the concentration of attractants and repellents in the environment, transduce a signal from the outside to the inside of the cell, and facilitate sensory adaptation through the variation of the level of methylation. All amino acids serve as attractants in B.subtilis, they appear to cause an increase in the turnover methyl groups, leading to methylation of an unidentified acceptor, while repellents have been shown to cause a decrease in methyl group turnover. The methyl groups are added by a methyltransferase and removed by a methylesterase. McpC is required for taxis to cysteine, proline, threonine, glycine, serine, lysine, valine and arginine and for aspartate, glutamine, histidine and glutamate. Primarily mediates response to positive stimulus of PTS carbohydrates. Greatly influences the duration or magnitude of the response to negative PTS carbohydrate stimulus. In Bacillus subtilis (strain 168), this protein is Methyl-accepting chemotaxis protein McpC (mcpC).